The sequence spans 426 residues: Glutamate-1-semialdehyde 2,1-aminomutase (426 aa).

Lys-265 is subject to N6-(pyridoxal phosphate)lysine.

This sequence belongs to the class-III pyridoxal-phosphate-dependent aminotransferase family. HemL subfamily. Homodimer. Pyridoxal 5'-phosphate serves as cofactor.

The protein resides in the cytoplasm. It catalyses the reaction (S)-4-amino-5-oxopentanoate = 5-aminolevulinate. It participates in porphyrin-containing compound metabolism; protoporphyrin-IX biosynthesis; 5-aminolevulinate from L-glutamyl-tRNA(Glu): step 2/2. The sequence is that of Glutamate-1-semialdehyde 2,1-aminomutase from Alcanivorax borkumensis (strain ATCC 700651 / DSM 11573 / NCIMB 13689 / SK2).